The sequence spans 131 residues: Protein yippee-like PJ691.02 (131 aa).

Residues 12–109 (RCYVCAKCKT…LEMQDAVLQR (98 aa)) form the Yippee domain. Residues Cys16, Cys19, Cys72, and Cys75 each contribute to the Zn(2+) site.

It belongs to the yippee family.

The chain is Protein yippee-like PJ691.02 from Schizosaccharomyces pombe (strain 972 / ATCC 24843) (Fission yeast).